The sequence spans 356 residues: Histidinol-phosphate aminotransferase (356 aa).

Lys-214 is subject to N6-(pyridoxal phosphate)lysine.

The protein belongs to the class-II pyridoxal-phosphate-dependent aminotransferase family. Histidinol-phosphate aminotransferase subfamily. As to quaternary structure, homodimer. Pyridoxal 5'-phosphate is required as a cofactor.

The catalysed reaction is L-histidinol phosphate + 2-oxoglutarate = 3-(imidazol-4-yl)-2-oxopropyl phosphate + L-glutamate. It participates in amino-acid biosynthesis; L-histidine biosynthesis; L-histidine from 5-phospho-alpha-D-ribose 1-diphosphate: step 7/9. This chain is Histidinol-phosphate aminotransferase, found in Escherichia coli (strain SMS-3-5 / SECEC).